The primary structure comprises 478 residues: MASSDTEGKRVVVIGGGLVGALNACFLAKRNFQVDVYEAREDIRVANFMRGRSINLALSYRGRQALKAVGLEDQIVSKGVPMKARMIHSLSGKKSAIPYGNKSQYILSISREKLNKDLLTAVESYPNAKVHFGHKLSKCCPEEGILTMLGPNKVPRDITCDLIVGCDGAYSTVRAHLMKKPRFDYSQQYIPHGYMELTIPPKNGEYAMEPNCLHIWPRNAFMMIALPNMDKSFTCTLFMSFEEFEKLPTHSDVLDFFQKNFPDAIPLMGEQALMRDFFLLPAQPMISVKCSPFHLKSRCVLMGDAAHAIVPFFGQGMNAGFEDCLVFDELMDKFNNDLSVCLPEFSRFRIPDDHAISDLSMYNYIEMRAHVNSRWFLFQRLLDKFLHALMPSTFIPLYTMVAFTRIRYHEAVLRWHWQKKVINRGLFVLGSLVAIGSAYILVHHLSPRPLELLRSAWTGTSGHWNRSADISPRVPWSH.

Residues valine 19, tyrosine 37 to arginine 40, and alanine 57 each bind FAD. Residues arginine 85 and tyrosine 99 each contribute to the L-kynurenine site. Residues arginine 111, leucine 136, threonine 172, aspartate 304, and methionine 317–asparagine 318 contribute to the FAD site. Residues asparagine 363 and tyrosine 398 each coordinate L-kynurenine. Helical transmembrane passes span phenylalanine 385 to threonine 404 and glycine 425 to leucine 445.

It belongs to the aromatic-ring hydroxylase family. KMO subfamily. Requires FAD as cofactor. In terms of tissue distribution, highest activity in liver and kidney. Low activity in spleen, stomach, intestinal tract, esophagus, heart and lung.

The protein resides in the mitochondrion outer membrane. It carries out the reaction L-kynurenine + NADPH + O2 + H(+) = 3-hydroxy-L-kynurenine + NADP(+) + H2O. It functions in the pathway cofactor biosynthesis; NAD(+) biosynthesis; quinolinate from L-kynurenine: step 1/3. In terms of biological role, catalyzes the hydroxylation of L-kynurenine (L-Kyn) to form 3-hydroxy-L-kynurenine (L-3OHKyn). Required for synthesis of quinolinic acid, a neurotoxic NMDA receptor antagonist and potential endogenous inhibitor of NMDA receptor signaling in axonal targeting, synaptogenesis and apoptosis during brain development. Quinolinic acid may also affect NMDA receptor signaling in pancreatic beta cells, osteoblasts, myocardial cells, and the gastrointestinal tract. The polypeptide is Kynurenine 3-monooxygenase (Rattus norvegicus (Rat)).